We begin with the raw amino-acid sequence, 428 residues long: Phosphomethylpyrimidine synthase 2 (428 aa).

Substrate contacts are provided by residues Met-94, Tyr-123, His-162, 184–186 (SRG), 225–228 (NGMR), and Glu-264. His-268 serves as a coordination point for Zn(2+). Residue Tyr-291 coordinates substrate. Residue His-332 coordinates Zn(2+). [4Fe-4S] cluster is bound by residues Cys-408, Cys-411, and Cys-415.

This sequence belongs to the ThiC family. The cofactor is [4Fe-4S] cluster.

The enzyme catalyses 5-amino-1-(5-phospho-beta-D-ribosyl)imidazole + S-adenosyl-L-methionine = 4-amino-2-methyl-5-(phosphooxymethyl)pyrimidine + CO + 5'-deoxyadenosine + formate + L-methionine + 3 H(+). It participates in cofactor biosynthesis; thiamine diphosphate biosynthesis. In terms of biological role, catalyzes the synthesis of the hydroxymethylpyrimidine phosphate (HMP-P) moiety of thiamine from aminoimidazole ribotide (AIR) in a radical S-adenosyl-L-methionine (SAM)-dependent reaction. The sequence is that of Phosphomethylpyrimidine synthase 2 from Methanosarcina mazei (strain ATCC BAA-159 / DSM 3647 / Goe1 / Go1 / JCM 11833 / OCM 88) (Methanosarcina frisia).